The chain runs to 61 residues: UPF0181 protein KPN78578_22920 (61 aa).

Belongs to the UPF0181 family.

The polypeptide is UPF0181 protein KPN78578_22920 (Klebsiella pneumoniae subsp. pneumoniae (strain ATCC 700721 / MGH 78578)).